The sequence spans 195 residues: HTH-type transcriptional regulator BetI (195 aa).

Positions 8 to 68 constitute an HTH tetR-type domain; sequence SIRRRQLIDA…ATMRDITSQL (61 aa). Positions 31–50 form a DNA-binding region, H-T-H motif; the sequence is TIAQIARRAGVSTGIISHYF.

It functions in the pathway amine and polyamine biosynthesis; betaine biosynthesis via choline pathway [regulation]. Its function is as follows. Repressor involved in the biosynthesis of the osmoprotectant glycine betaine. It represses transcription of the choline transporter BetT and the genes of BetAB involved in the synthesis of glycine betaine. In Escherichia coli (strain UTI89 / UPEC), this protein is HTH-type transcriptional regulator BetI.